A 479-amino-acid chain; its full sequence is F-box protein At5g51380 (479 aa).

A disordered region spans residues 1-20 (MTFREKMPTSPKSPLRRRRS). Residues 62–108 (DRTLSLSDSLLLKILEKLPESQNEDVSLVCKRWLSVQGRRLRSMKVF) enclose the F-box domain.

The protein is F-box protein At5g51380 of Arabidopsis thaliana (Mouse-ear cress).